Consider the following 172-residue polypeptide: uncharacterized protein (172 aa).

2 disordered regions span residues 1–54 (MPRR…GGSS) and 82–111 (ITGG…SVPE). Low complexity predominate over residues 14–29 (AAPARSASTAAALPPR). Positions 30–47 (TMAPPPAPSRVQQAPPPT) are enriched in pro residues. Over residues 89 to 109 (SGSNNAPADTSVPQSSYSNSV) the composition is skewed to polar residues.

This is an uncharacterized protein from Schizosaccharomyces pombe (strain 972 / ATCC 24843) (Fission yeast).